The sequence spans 817 residues: Leucine--tRNA ligase (817 aa).

Positions P40 to H50 match the 'HIGH' region motif. Positions K578–S582 match the 'KMSKS' region motif. K581 provides a ligand contact to ATP.

It belongs to the class-I aminoacyl-tRNA synthetase family.

Its subcellular location is the cytoplasm. The catalysed reaction is tRNA(Leu) + L-leucine + ATP = L-leucyl-tRNA(Leu) + AMP + diphosphate. In Caldicellulosiruptor saccharolyticus (strain ATCC 43494 / DSM 8903 / Tp8T 6331), this protein is Leucine--tRNA ligase.